The primary structure comprises 347 residues: D-alanine--D-alanine ligase (347 aa).

The ATP-grasp domain maps to 131-333 (KRVLESAGIA…YPELIERLVD (203 aa)). 161 to 216 (EEKLAYPVFTKPSNMGSSVGISKSENQEELRPALELAFRYDSRVLVEQGVNAREIE) serves as a coordination point for ATP. 3 residues coordinate Mg(2+): Asp-287, Glu-300, and Asn-302.

It belongs to the D-alanine--D-alanine ligase family. The cofactor is Mg(2+). Mn(2+) is required as a cofactor.

It localises to the cytoplasm. The catalysed reaction is 2 D-alanine + ATP = D-alanyl-D-alanine + ADP + phosphate + H(+). It participates in cell wall biogenesis; peptidoglycan biosynthesis. Functionally, cell wall formation. This is D-alanine--D-alanine ligase from Streptococcus pneumoniae (strain Taiwan19F-14).